The chain runs to 318 residues: Thymidylate synthase (318 aa).

Residues Arg25 and 180–181 (RR) contribute to the dUMP site. Cys200 serves as the catalytic Nucleophile. DUMP-binding positions include 220 to 223 (RSGD), Asn231, and 261 to 263 (HIY). Asp223 is a (6R)-5,10-methylene-5,6,7,8-tetrahydrofolate binding site. Ala317 lines the (6R)-5,10-methylene-5,6,7,8-tetrahydrofolate pocket.

Belongs to the thymidylate synthase family. Bacterial-type ThyA subfamily. Homodimer.

The protein resides in the cytoplasm. It catalyses the reaction dUMP + (6R)-5,10-methylene-5,6,7,8-tetrahydrofolate = 7,8-dihydrofolate + dTMP. Its pathway is pyrimidine metabolism; dTTP biosynthesis. Functionally, catalyzes the reductive methylation of 2'-deoxyuridine-5'-monophosphate (dUMP) to 2'-deoxythymidine-5'-monophosphate (dTMP) while utilizing 5,10-methylenetetrahydrofolate (mTHF) as the methyl donor and reductant in the reaction, yielding dihydrofolate (DHF) as a by-product. This enzymatic reaction provides an intracellular de novo source of dTMP, an essential precursor for DNA biosynthesis. The protein is Thymidylate synthase of Lactobacillus helveticus (strain DPC 4571).